The chain runs to 242 residues: 2-C-methyl-D-erythritol 4-phosphate cytidylyltransferase (242 aa).

It belongs to the IspD/TarI cytidylyltransferase family. IspD subfamily.

The enzyme catalyses 2-C-methyl-D-erythritol 4-phosphate + CTP + H(+) = 4-CDP-2-C-methyl-D-erythritol + diphosphate. The protein operates within isoprenoid biosynthesis; isopentenyl diphosphate biosynthesis via DXP pathway; isopentenyl diphosphate from 1-deoxy-D-xylulose 5-phosphate: step 2/6. Functionally, catalyzes the formation of 4-diphosphocytidyl-2-C-methyl-D-erythritol from CTP and 2-C-methyl-D-erythritol 4-phosphate (MEP). The polypeptide is 2-C-methyl-D-erythritol 4-phosphate cytidylyltransferase (Shewanella loihica (strain ATCC BAA-1088 / PV-4)).